A 435-amino-acid chain; its full sequence is Serine--tRNA ligase (435 aa).

An L-serine-binding site is contributed by 234 to 236 (TAE). 265–267 (RRE) contacts ATP. Glu288 is a binding site for L-serine. 352-355 (EISS) contributes to the ATP binding site. Ser388 contributes to the L-serine binding site.

It belongs to the class-II aminoacyl-tRNA synthetase family. Type-1 seryl-tRNA synthetase subfamily. Homodimer. The tRNA molecule binds across the dimer.

It localises to the cytoplasm. The enzyme catalyses tRNA(Ser) + L-serine + ATP = L-seryl-tRNA(Ser) + AMP + diphosphate + H(+). It catalyses the reaction tRNA(Sec) + L-serine + ATP = L-seryl-tRNA(Sec) + AMP + diphosphate + H(+). It participates in aminoacyl-tRNA biosynthesis; selenocysteinyl-tRNA(Sec) biosynthesis; L-seryl-tRNA(Sec) from L-serine and tRNA(Sec): step 1/1. Its function is as follows. Catalyzes the attachment of serine to tRNA(Ser). Is also able to aminoacylate tRNA(Sec) with serine, to form the misacylated tRNA L-seryl-tRNA(Sec), which will be further converted into selenocysteinyl-tRNA(Sec). The protein is Serine--tRNA ligase of Synechococcus sp. (strain JA-2-3B'a(2-13)) (Cyanobacteria bacterium Yellowstone B-Prime).